Consider the following 135-residue polypeptide: Early nodulin-5 (135 aa).

The N-terminal stretch at 1-23 (MASSSSPIFLMIIFSMWLLFSYS) is a signal peptide.

Invasion zone and early symbiotic zone.

Functionally, involved in the infection process during the plant-rhizobium interaction. The chain is Early nodulin-5 (ENOD5) from Pisum sativum (Garden pea).